The sequence spans 130 residues: Small ribosomal subunit protein uS9 (130 aa).

Basic and acidic residues predominate over residues 99-110 (KKAGFLTRDPRM). Residues 99–130 (KKAGFLTRDPRMKERKKYGLKKARRAPQFSKR) are disordered. The segment covering 111–130 (KERKKYGLKKARRAPQFSKR) has biased composition (basic residues).

The protein belongs to the universal ribosomal protein uS9 family.

The chain is Small ribosomal subunit protein uS9 from Clostridium botulinum (strain Eklund 17B / Type B).